Here is a 226-residue protein sequence, read N- to C-terminus: Protein DVU_0532 (226 aa).

6 helical membrane-spanning segments follow: residues 1 to 23 (MYAF…GLLA), 46 to 57 (AIGLQGAVQSAL), 73 to 99 (FFTV…NVIL), 112 to 131 (MGVA…MIAL), 141 to 164 (ILTT…GFLA), and 194 to 222 (LSHI…TRGP).

Heme b serves as cofactor.

Its subcellular location is the cell membrane. In terms of biological role, HMWC (high-molecular-weight cytochrome c), ORF2, ORF3, ORF4, ORF5 and ORF6 in the HMC operon form a transmembrane protein complex that allows electron flow from the periplasmic hydrogenase to the cytoplasmic enzymes that catalyze reduction of sulfates. The chain is Protein DVU_0532 from Nitratidesulfovibrio vulgaris (strain ATCC 29579 / DSM 644 / CCUG 34227 / NCIMB 8303 / VKM B-1760 / Hildenborough) (Desulfovibrio vulgaris).